We begin with the raw amino-acid sequence, 502 residues long: Glycerol kinase (502 aa).

Thr-14 serves as a coordination point for ADP. Residues Thr-14, Thr-15, and Ser-16 each coordinate ATP. Position 14 (Thr-14) interacts with sn-glycerol 3-phosphate. An ADP-binding site is contributed by Arg-18. Sn-glycerol 3-phosphate contacts are provided by Arg-84, Glu-85, and Tyr-136. 3 residues coordinate glycerol: Arg-84, Glu-85, and Tyr-136. His-232 is subject to Phosphohistidine; by HPr. Sn-glycerol 3-phosphate is bound at residue Asp-246. The glycerol site is built by Asp-246 and Gln-247. ADP is bound by residues Thr-268 and Gly-311. ATP-binding residues include Thr-268, Gly-311, Gln-315, and Gly-412. The ADP site is built by Gly-412 and Asn-416.

It belongs to the FGGY kinase family. Homotetramer and homodimer (in equilibrium). In terms of processing, the phosphoenolpyruvate-dependent sugar phosphotransferase system (PTS), including enzyme I, and histidine-containing protein (HPr) are required for the phosphorylation, which leads to the activation of the enzyme.

It carries out the reaction glycerol + ATP = sn-glycerol 3-phosphate + ADP + H(+). The protein operates within polyol metabolism; glycerol degradation via glycerol kinase pathway; sn-glycerol 3-phosphate from glycerol: step 1/1. With respect to regulation, activated by phosphorylation and inhibited by fructose 1,6-bisphosphate (FBP). In terms of biological role, key enzyme in the regulation of glycerol uptake and metabolism. Catalyzes the phosphorylation of glycerol to yield sn-glycerol 3-phosphate. The polypeptide is Glycerol kinase (Streptococcus pneumoniae (strain ATCC 700669 / Spain 23F-1)).